Here is a 255-residue protein sequence, read N- to C-terminus: Diphthine synthase (255 aa).

S-adenosyl-L-methionine contacts are provided by residues Leu-9, Asp-85, Val-88, 113–114 (SI), Leu-164, Ala-207, and His-232.

This sequence belongs to the diphthine synthase family. In terms of assembly, homodimer.

The catalysed reaction is 2-[(3S)-amino-3-carboxypropyl]-L-histidyl-[translation elongation factor 2] + 3 S-adenosyl-L-methionine = diphthine-[translation elongation factor 2] + 3 S-adenosyl-L-homocysteine + 3 H(+). It functions in the pathway protein modification; peptidyl-diphthamide biosynthesis. S-adenosyl-L-methionine-dependent methyltransferase that catalyzes the trimethylation of the amino group of the modified target histidine residue in translation elongation factor 2 (EF-2), to form an intermediate called diphthine. The three successive methylation reactions represent the second step of diphthamide biosynthesis. The chain is Diphthine synthase from Methanococcus maripaludis (strain DSM 14266 / JCM 13030 / NBRC 101832 / S2 / LL).